Consider the following 123-residue polypeptide: MPTIQQLIRKPRQPKVQRSKSQHLQSCPQKRGVCTRVYTTTPKKPNSAMRKVAKVRLTNGFEVISYIPGEKHNLQEHSVVLIRGGRVKDLPGVRYHILRGVLDTQGVKDRRQRRSKYGAKRPK.

The interval 1–30 is disordered; the sequence is MPTIQQLIRKPRQPKVQRSKSQHLQSCPQK. Residues 9–21 are compositionally biased toward basic residues; it reads RKPRQPKVQRSKS. Asp89 is subject to 3-methylthioaspartic acid.

This sequence belongs to the universal ribosomal protein uS12 family. Part of the 30S ribosomal subunit. Contacts proteins S8 and S17. May interact with IF1 in the 30S initiation complex.

Functionally, with S4 and S5 plays an important role in translational accuracy. In terms of biological role, interacts with and stabilizes bases of the 16S rRNA that are involved in tRNA selection in the A site and with the mRNA backbone. Located at the interface of the 30S and 50S subunits, it traverses the body of the 30S subunit contacting proteins on the other side and probably holding the rRNA structure together. The combined cluster of proteins S8, S12 and S17 appears to hold together the shoulder and platform of the 30S subunit. This Paracoccus denitrificans (strain Pd 1222) protein is Small ribosomal subunit protein uS12.